The following is an 89-amino-acid chain: Small ribosomal subunit protein uS15 (89 aa).

The protein belongs to the universal ribosomal protein uS15 family. In terms of assembly, part of the 30S ribosomal subunit. Forms a bridge to the 50S subunit in the 70S ribosome, contacting the 23S rRNA.

In terms of biological role, one of the primary rRNA binding proteins, it binds directly to 16S rRNA where it helps nucleate assembly of the platform of the 30S subunit by binding and bridging several RNA helices of the 16S rRNA. Functionally, forms an intersubunit bridge (bridge B4) with the 23S rRNA of the 50S subunit in the ribosome. This Vibrio cholerae serotype O1 (strain ATCC 39541 / Classical Ogawa 395 / O395) protein is Small ribosomal subunit protein uS15.